The sequence spans 399 residues: Elongation factor Tu (399 aa).

A tr-type G domain is found at 10-209; it reads KPHVNIGTIG…AVDEYIPTPE (200 aa). The tract at residues 19–26 is G1; sequence GHVDHGKT. 19–26 lines the GTP pocket; it reads GHVDHGKT. T26 is a binding site for Mg(2+). The G2 stretch occupies residues 60–64; that stretch reads GITIN. The tract at residues 81–84 is G3; sequence DCPG. GTP contacts are provided by residues 81–85 and 136–139; these read DCPGH and NKMD. Positions 136–139 are G4; that stretch reads NKMD. The tract at residues 174 to 176 is G5; that stretch reads SAL.

Belongs to the TRAFAC class translation factor GTPase superfamily. Classic translation factor GTPase family. EF-Tu/EF-1A subfamily. In terms of assembly, monomer.

It localises to the cytoplasm. It carries out the reaction GTP + H2O = GDP + phosphate + H(+). Its function is as follows. GTP hydrolase that promotes the GTP-dependent binding of aminoacyl-tRNA to the A-site of ribosomes during protein biosynthesis. This chain is Elongation factor Tu, found in Nautilia profundicola (strain ATCC BAA-1463 / DSM 18972 / AmH).